The primary structure comprises 305 residues: Aspartate carbamoyltransferase catalytic subunit (305 aa).

Positions 52 and 53 each coordinate carbamoyl phosphate. L-aspartate is bound at residue Lys80. Arg102, His132, and Gln135 together coordinate carbamoyl phosphate. L-aspartate contacts are provided by Arg165 and Arg217. Ala258 and Pro259 together coordinate carbamoyl phosphate.

The protein belongs to the aspartate/ornithine carbamoyltransferase superfamily. ATCase family. In terms of assembly, heterododecamer (2C3:3R2) of six catalytic PyrB chains organized as two trimers (C3), and six regulatory PyrI chains organized as three dimers (R2).

It catalyses the reaction carbamoyl phosphate + L-aspartate = N-carbamoyl-L-aspartate + phosphate + H(+). It participates in pyrimidine metabolism; UMP biosynthesis via de novo pathway; (S)-dihydroorotate from bicarbonate: step 2/3. In terms of biological role, catalyzes the condensation of carbamoyl phosphate and aspartate to form carbamoyl aspartate and inorganic phosphate, the committed step in the de novo pyrimidine nucleotide biosynthesis pathway. The protein is Aspartate carbamoyltransferase catalytic subunit of Latilactobacillus sakei subsp. sakei (strain 23K) (Lactobacillus sakei subsp. sakei).